Reading from the N-terminus, the 318-residue chain is NADH-ubiquinone oxidoreductase chain 1 (318 aa).

9 consecutive transmembrane segments (helical) span residues 2-22 (FLMNMLCLIIPILLAMAFLTL), 37-57 (PNIVGPYGLLQPIADAIKLFI), 69-89 (LMFTLAPMLAFSLALSMWIPM), 100-120 (LGVLFILALSSLAVYSILWSG), 136-156 (VAQTISYEVTLAIILLSTMMM), 171-191 (HMWLIFPLWPLAMMWFISTLA), 206-226 (ELVSGFNVEYAAGPFALFFMA), 253-273 (ELFTANFVTKTLALTMAFLWI), and 294-314 (LPLTLALCMLHVSLPTVSAGI).

The protein belongs to the complex I subunit 1 family.

Its subcellular location is the mitochondrion inner membrane. The catalysed reaction is a ubiquinone + NADH + 5 H(+)(in) = a ubiquinol + NAD(+) + 4 H(+)(out). Core subunit of the mitochondrial membrane respiratory chain NADH dehydrogenase (Complex I) that is believed to belong to the minimal assembly required for catalysis. Complex I functions in the transfer of electrons from NADH to the respiratory chain. The immediate electron acceptor for the enzyme is believed to be ubiquinone. This is NADH-ubiquinone oxidoreductase chain 1 (MT-ND1) from Tolypeutes matacus (Southern three-banded armadillo).